The primary structure comprises 714 residues: ATP-dependent zinc metalloprotease FtsH (714 aa).

Over 1-75 (MEKPRRLRPR…KNPMEPRQQQ (75 aa)) the chain is Cytoplasmic. Residues 76–96 (FSLWYVLVTILAMLAIQTLFV) form a helical membrane-spanning segment. The Periplasmic segment spans residues 97–188 (SGHVETIPYS…FVGQPDNKWL (92 aa)). A helical membrane pass occupies residues 189 to 209 (STILSWVVPAVIFFGIWSFLI). The Cytoplasmic portion of the chain corresponds to 210 to 714 (KRVGGAAGSM…GKPDQKTQGT (505 aa)). 280–287 (GAPGTGKT) contributes to the ATP binding site. Zn(2+) is bound at residue H502. The active site involves E503. H506 and D579 together coordinate Zn(2+). The tract at residues 688 to 714 (PMPPPKPVANIEESTATGKPDQKTQGT) is disordered. Polar residues predominate over residues 699-714 (EESTATGKPDQKTQGT).

In the central section; belongs to the AAA ATPase family. The protein in the C-terminal section; belongs to the peptidase M41 family. In terms of assembly, homohexamer. The cofactor is Zn(2+).

The protein localises to the cell inner membrane. In terms of biological role, acts as a processive, ATP-dependent zinc metallopeptidase for both cytoplasmic and membrane proteins. Plays a role in the quality control of integral membrane proteins. The chain is ATP-dependent zinc metalloprotease FtsH from Ralstonia pickettii (strain 12J).